A 396-amino-acid chain; its full sequence is Elongation factor Tu 1 (396 aa).

The tr-type G domain occupies 10-206 (KPHINVGTIG…VLDSYIPEPQ (197 aa)). The segment at 19–26 (GHVDHGKT) is G1. 19–26 (GHVDHGKT) is a GTP binding site. Thr-26 lines the Mg(2+) pocket. A G2 region spans residues 60 to 64 (GITIN). Residues 81–84 (DCPG) are G3. GTP-binding positions include 81–85 (DCPGH) and 136–139 (NKAD). The interval 136 to 139 (NKAD) is G4. The G5 stretch occupies residues 174 to 176 (SAL).

The protein belongs to the TRAFAC class translation factor GTPase superfamily. Classic translation factor GTPase family. EF-Tu/EF-1A subfamily. Monomer.

Its subcellular location is the cytoplasm. It carries out the reaction GTP + H2O = GDP + phosphate + H(+). Functionally, GTP hydrolase that promotes the GTP-dependent binding of aminoacyl-tRNA to the A-site of ribosomes during protein biosynthesis. The protein is Elongation factor Tu 1 of Nitrosomonas eutropha (strain DSM 101675 / C91 / Nm57).